Consider the following 126-residue polypeptide: Small ribosomal subunit protein uS12 (126 aa).

A compositionally biased stretch (polar residues) spans 1 to 16 (MPTVNQLVRQGRTMNK). Residues 1–24 (MPTVNQLVRQGRTMNKTKTKSPAL) are disordered. Aspartate 89 carries the post-translational modification 3-methylthioaspartic acid.

It belongs to the universal ribosomal protein uS12 family. Part of the 30S ribosomal subunit. Contacts proteins S8 and S17. May interact with IF1 in the 30S initiation complex.

Its function is as follows. With S4 and S5 plays an important role in translational accuracy. Interacts with and stabilizes bases of the 16S rRNA that are involved in tRNA selection in the A site and with the mRNA backbone. Located at the interface of the 30S and 50S subunits, it traverses the body of the 30S subunit contacting proteins on the other side and probably holding the rRNA structure together. The combined cluster of proteins S8, S12 and S17 appears to hold together the shoulder and platform of the 30S subunit. This Elusimicrobium minutum (strain Pei191) protein is Small ribosomal subunit protein uS12.